An 86-amino-acid chain; its full sequence is Weak neurotoxin WNTX34 (86 aa).

Positions 1–21 are cleaved as a signal peptide; the sequence is MKTLLLTLVVVTIVCLDLGYS. Disulfide bonds link Cys24–Cys45, Cys27–Cys32, Cys38–Cys63, Cys67–Cys78, and Cys79–Cys84.

Belongs to the three-finger toxin family. Ancestral subfamily. Orphan group II sub-subfamily. As to expression, expressed by the venom gland.

The protein resides in the secreted. Its function is as follows. Binds with low affinity to muscular (alpha-1-beta-1-delta-epsilon/CHRNA1-CHRNB1-CHRND-CHRNE) and very low affinity to neuronal (alpha-7/CHRNA7) nicotinic acetylcholine receptor (nAChR). In Ophiophagus hannah (King cobra), this protein is Weak neurotoxin WNTX34.